The primary structure comprises 100 residues: Flagellar transcriptional regulator FlhD (100 aa).

The protein belongs to the FlhD family. In terms of assembly, homodimer; disulfide-linked. Forms a heterohexamer composed of two FlhC and four FlhD subunits. Each FlhC binds a FlhD dimer, forming a heterotrimer, and a hexamer assembles by dimerization of two heterotrimers.

The protein resides in the cytoplasm. Functions in complex with FlhC as a master transcriptional regulator that regulates transcription of several flagellar and non-flagellar operons by binding to their promoter region. Activates expression of class 2 flagellar genes, including fliA, which is a flagellum-specific sigma factor that turns on the class 3 genes. Also regulates genes whose products function in a variety of physiological pathways. This is Flagellar transcriptional regulator FlhD from Ralstonia pickettii (strain 12D).